A 386-amino-acid polypeptide reads, in one-letter code: MPLIAISYSHGKLSILNQLFLPHQTTYDPIYSACDAWHAIHDMRVRGAPAIAIVAALSVAVELYDLIQKGKLSDQAKEVEIFIREKLEYIASSRPTAVNLVEAAGRLGKIVVARSCGEGVTGREVAEEYIRAAEKMLEDDVKDNRGIGEFGAKWIMKQAIDGAEGEGEGKGKVAVLTHCNTGSLATAGYGTALGVIRSLHAANSLKHAYCTETRPYNQGSRLTAYELVHDNIPATLITDSMAAALLAHKSAGVGAIVVGADRVAANGDTANKIGTYGLAVLAKHHGVKFLVAAPRTTIDMNTKSGEGIAIEERPRQEMTRIRGPRVGGEQDGLGAMETITVAADGIDVWNPAFDVTPASLIDGIITEIGVVEKDRDGEFHLERVFE.

D261 functions as the Proton donor in the catalytic mechanism.

Belongs to the eIF-2B alpha/beta/delta subunits family. MtnA subfamily.

Its subcellular location is the cytoplasm. It localises to the nucleus. It carries out the reaction 5-(methylsulfanyl)-alpha-D-ribose 1-phosphate = 5-(methylsulfanyl)-D-ribulose 1-phosphate. Its pathway is amino-acid biosynthesis; L-methionine biosynthesis via salvage pathway; L-methionine from S-methyl-5-thio-alpha-D-ribose 1-phosphate: step 1/6. Catalyzes the interconversion of methylthioribose-1-phosphate (MTR-1-P) into methylthioribulose-1-phosphate (MTRu-1-P). This chain is Methylthioribose-1-phosphate isomerase, found in Paracoccidioides brasiliensis (strain Pb03).